Consider the following 181-residue polypeptide: GATA zinc finger domain-containing protein 22 (181 aa).

The segment at 118–145 adopts a GATA-type zinc-finger fold; the sequence is CQICLTNNTPYWRWSVIENNKIRVCNRC.

The chain is GATA zinc finger domain-containing protein 22 (gtaV) from Dictyostelium discoideum (Social amoeba).